The sequence spans 126 residues: Large ribosomal subunit protein bL12 (126 aa).

It belongs to the bacterial ribosomal protein bL12 family. In terms of assembly, homodimer. Part of the ribosomal stalk of the 50S ribosomal subunit. Forms a multimeric L10(L12)X complex, where L10 forms an elongated spine to which 2 to 4 L12 dimers bind in a sequential fashion. Binds GTP-bound translation factors.

Forms part of the ribosomal stalk which helps the ribosome interact with GTP-bound translation factors. Is thus essential for accurate translation. This Acidovorax sp. (strain JS42) protein is Large ribosomal subunit protein bL12.